A 1146-amino-acid chain; its full sequence is Reverse gyrase 1 (1146 aa).

The RG N-terminal-type zinc-finger motif lies at 1 to 38 (MIKAIFDTLCPNCGGEISAERLLKGLPCEKCLPEEVNR). Positions 10, 13, 28, and 31 each coordinate Zn(2+). ATP is bound by residues Q79 and 96–103 (APTGVGKT). The region spanning 83 to 240 (ARKVFLGRSF…RLKEKPNKSE (158 aa)) is the Helicase ATP-binding domain. The short motif at 197–200 (DDVD) is the DEAD box element. The 154-residue stretch at 412–565 (HLLWALLSLR…FKKIEEVDLK (154 aa)) folds into the Helicase C-terminal domain. The segment at 592–1146 (EHVKPVLVVV…KVNEFEKANV (555 aa)) is topoisomerase I. The Toprim domain occupies 596-728 (PVLVVVESPN…NVERIEFHEV (133 aa)). Residues E602 and D697 each contribute to the Mg(2+) site. One can recognise a Topo IA-type catalytic domain in the interval 744-1142 (NENLVKAQLV…ELYKKVNEFE (399 aa)). The active-site O-(5'-phospho-DNA)-tyrosine intermediate is the Y891.

It in the N-terminal section; belongs to the DEAD box helicase family. DDVD subfamily. In the C-terminal section; belongs to the type IA topoisomerase family. In terms of assembly, monomer. The cofactor is Zn(2+). Requires Mg(2+) as cofactor.

It localises to the cytoplasm. The catalysed reaction is ATP + H2O = ADP + phosphate + H(+). Functionally, modifies the topological state of DNA by introducing positive supercoils in an ATP-dependent process, increasing the linking number in steps of +1. Binds to single-stranded DNA, transiently cleaves and then rejoins the ends, introducing a positive supercoil in the process. The scissile phosphodiester is attacked by the catalytic tyrosine of the enzyme, resulting in the formation of a DNA-(5'-phosphotyrosyl)-enzyme intermediate. Probably involved in rewinding DNA strands in regions of the chromosome that have opened up to allow replication, transcription, DNA repair and/or for DNA protection. This Aquifex aeolicus (strain VF5) protein is Reverse gyrase 1.